A 995-amino-acid chain; its full sequence is UPF0182 protein NFA_45260 (995 aa).

7 helical membrane passes run Val-18–Asp-38, Ile-63–Leu-83, Phe-115–Trp-135, Phe-176–Leu-196, Ile-211–Asp-231, Lys-260–Leu-280, and Met-288–Val-308. Residues Ala-904–Leu-957 form a disordered region. 2 stretches are compositionally biased toward low complexity: residues Thr-927 to Pro-938 and Gly-946 to Ala-955.

It belongs to the UPF0182 family.

It is found in the cell membrane. The polypeptide is UPF0182 protein NFA_45260 (Nocardia farcinica (strain IFM 10152)).